The following is a 747-amino-acid chain: ATP-dependent DNA helicase Hel308 (747 aa).

Residues Gln29 and 47 to 54 (VPTASGKT) each bind ATP. In terms of domain architecture, Helicase ATP-binding spans 34–200 (DAGVADGESL…WLDAELVDSS (167 aa)). The DEAH box motif lies at 145–148 (DEVH). The region spanning 234-434 (PTEAVVRETL…REPSMRTHLL (201 aa)) is the Helicase C-terminal domain. The disordered stretch occupies residues 711 to 747 (AAGHQQPEMDGVTPDADVKESAAAAGTDDGQANLGDF).

It belongs to the helicase family. Hel308 subfamily. As to quaternary structure, monomer.

The enzyme catalyses Couples ATP hydrolysis with the unwinding of duplex DNA by translocating in the 3'-5' direction.. It carries out the reaction ATP + H2O = ADP + phosphate + H(+). Its function is as follows. DNA-dependent ATPase and 3'-5' DNA helicase that may be involved in repair of stalled replication forks. The protein is ATP-dependent DNA helicase Hel308 of Natronomonas pharaonis (strain ATCC 35678 / DSM 2160 / CIP 103997 / JCM 8858 / NBRC 14720 / NCIMB 2260 / Gabara) (Halobacterium pharaonis).